We begin with the raw amino-acid sequence, 537 residues long: Methionine--tRNA ligase (537 aa).

The 'HIGH' region signature appears at 11–21 (AYPNAAPHIGH). The 'KMSKS' region motif lies at 301-305 (KMSKS). An ATP-binding site is contributed by Lys304. Residues 503–537 (PPPTGVFPRYQPSEIEGADPVKSSSKRREHNKRRE) are disordered. The span at 526–537 (SSKRREHNKRRE) shows a compositional bias: basic residues.

Belongs to the class-I aminoacyl-tRNA synthetase family. MetG type 2B subfamily. As to quaternary structure, monomer.

It is found in the cytoplasm. The enzyme catalyses tRNA(Met) + L-methionine + ATP = L-methionyl-tRNA(Met) + AMP + diphosphate. Its function is as follows. Is required not only for elongation of protein synthesis but also for the initiation of all mRNA translation through initiator tRNA(fMet) aminoacylation. This Mycobacterium leprae (strain TN) protein is Methionine--tRNA ligase.